The primary structure comprises 359 residues: Photosystem II protein D1 2 (359 aa).

The next 3 membrane-spanning stretches (helical) occupy residues 29–46 (YVGWFGVLMIPTLLAATT), 118–133 (HFLIGIYAYMGREWEL), and 142–156 (WICVAYSAPVAAASA). H118 serves as a coordination point for chlorophyll a. Residue Y126 participates in pheophytin a binding. D170 and E189 together coordinate [CaMn4O5] cluster. A helical transmembrane segment spans residues 197–218 (FHMLGVAGVFGGSLFSAMHGSL). H198 contacts chlorophyll a. A quinone-binding positions include H215 and 264–265 (SF). Fe cation is bound at residue H215. H272 provides a ligand contact to Fe cation. A helical transmembrane segment spans residues 274–288 (FLAAWPVVGIWFTAL). 4 residues coordinate [CaMn4O5] cluster: H332, E333, D342, and A344. Positions 345–359 (AAESTPVALQAPAIG) are excised as a propeptide.

Belongs to the reaction center PufL/M/PsbA/D family. PSII is composed of 1 copy each of membrane proteins PsbA, PsbB, PsbC, PsbD, PsbE, PsbF, PsbH, PsbI, PsbJ, PsbK, PsbL, PsbM, PsbT, PsbX, PsbY, PsbZ, Psb30/Ycf12, peripheral proteins PsbO, CyanoQ (PsbQ), PsbU, PsbV and a large number of cofactors. It forms dimeric complexes. The D1/D2 heterodimer binds P680, chlorophylls that are the primary electron donor of PSII, and subsequent electron acceptors. It shares a non-heme iron and each subunit binds pheophytin, quinone, additional chlorophylls, carotenoids and lipids. D1 provides most of the ligands for the Mn4-Ca-O5 cluster of the oxygen-evolving complex (OEC). There is also a Cl(-1) ion associated with D1 and D2, which is required for oxygen evolution. The PSII complex binds additional chlorophylls, carotenoids and specific lipids. serves as cofactor. Tyr-161 forms a radical intermediate that is referred to as redox-active TyrZ, YZ or Y-Z. In terms of processing, C-terminally processed by CtpA; processing is essential to allow assembly of the oxygen-evolving complex and thus photosynthetic growth.

The protein localises to the cellular thylakoid membrane. The enzyme catalyses 2 a plastoquinone + 4 hnu + 2 H2O = 2 a plastoquinol + O2. Functionally, photosystem II (PSII) is a light-driven water:plastoquinone oxidoreductase that uses light energy to abstract electrons from H(2)O, generating O(2) and a proton gradient subsequently used for ATP formation. It consists of a core antenna complex that captures photons, and an electron transfer chain that converts photonic excitation into a charge separation. The D1/D2 (PsbA/PsbD) reaction center heterodimer binds P680, the primary electron donor of PSII as well as several subsequent electron acceptors. The sequence is that of Photosystem II protein D1 2 from Synechococcus sp. (strain CC9311).